The chain runs to 153 residues: MAVKIRLKRLGKIRAPHYRIVVADSRTKRDGRVIEEIGLYHPTEEPSRIEVDSDRAQYWLGVGSQPTEQVLVLLKLTGDWGTFKGDKNAVSTVKVAGAKEAFVADEKKKPVLKPKAAKPAEAEAVIEAEEAAEVEVVAEAGDIADEAADGEKA.

Belongs to the bacterial ribosomal protein bS16 family.

In Leifsonia xyli subsp. xyli (strain CTCB07), this protein is Small ribosomal subunit protein bS16.